We begin with the raw amino-acid sequence, 316 residues long: Coproporphyrin III ferrochelatase (316 aa).

Residues Tyr13, Arg30, 46-47, Ser54, and Tyr125 contribute to the Fe-coproporphyrin III site; that span reads RY. The Fe(2+) site is built by His183 and Glu264.

Belongs to the ferrochelatase family.

Its subcellular location is the cytoplasm. It catalyses the reaction Fe-coproporphyrin III + 2 H(+) = coproporphyrin III + Fe(2+). It participates in porphyrin-containing compound metabolism; protoheme biosynthesis. Involved in coproporphyrin-dependent heme b biosynthesis. Catalyzes the insertion of ferrous iron into coproporphyrin III to form Fe-coproporphyrin III. In Geobacillus kaustophilus (strain HTA426), this protein is Coproporphyrin III ferrochelatase.